We begin with the raw amino-acid sequence, 114 residues long: Nucleoid-associated protein SGR_3378 (114 aa).

The protein belongs to the YbaB/EbfC family. In terms of assembly, homodimer.

The protein localises to the cytoplasm. The protein resides in the nucleoid. Its function is as follows. Binds to DNA and alters its conformation. May be involved in regulation of gene expression, nucleoid organization and DNA protection. This is Nucleoid-associated protein SGR_3378 from Streptomyces griseus subsp. griseus (strain JCM 4626 / CBS 651.72 / NBRC 13350 / KCC S-0626 / ISP 5235).